The following is a 58-amino-acid chain: Large ribosomal subunit protein uL30 (58 aa).

The protein belongs to the universal ribosomal protein uL30 family. As to quaternary structure, part of the 50S ribosomal subunit.

This chain is Large ribosomal subunit protein uL30, found in Bacteroides thetaiotaomicron (strain ATCC 29148 / DSM 2079 / JCM 5827 / CCUG 10774 / NCTC 10582 / VPI-5482 / E50).